The following is a 275-amino-acid chain: NH(3)-dependent NAD(+) synthetase (275 aa).

An ATP-binding site is contributed by 47–54 (GISGGQDS). D53 is a Mg(2+) binding site. A deamido-NAD(+)-binding site is contributed by R141. T161 serves as a coordination point for ATP. E166 is a binding site for Mg(2+). Deamido-NAD(+) contacts are provided by K174 and D181. Residues K190 and T212 each coordinate ATP. Residue 261 to 262 (HK) coordinates deamido-NAD(+).

The protein belongs to the NAD synthetase family. Homodimer.

The enzyme catalyses deamido-NAD(+) + NH4(+) + ATP = AMP + diphosphate + NAD(+) + H(+). The protein operates within cofactor biosynthesis; NAD(+) biosynthesis; NAD(+) from deamido-NAD(+) (ammonia route): step 1/1. Its function is as follows. Catalyzes the ATP-dependent amidation of deamido-NAD to form NAD. Uses ammonia as a nitrogen source. The polypeptide is NH(3)-dependent NAD(+) synthetase (Latilactobacillus sakei subsp. sakei (strain 23K) (Lactobacillus sakei subsp. sakei)).